A 218-amino-acid chain; its full sequence is Octanoyltransferase (218 aa).

The BPL/LPL catalytic domain occupies 31 to 206 (REAADEVWLV…QLVKHLDYAE (176 aa)). Substrate is bound by residues 70–77 (RGGQVTYH), 137–139 (SLG), and 150–152 (GLA). Cys168 serves as the catalytic Acyl-thioester intermediate.

Belongs to the LipB family.

It localises to the cytoplasm. It catalyses the reaction octanoyl-[ACP] + L-lysyl-[protein] = N(6)-octanoyl-L-lysyl-[protein] + holo-[ACP] + H(+). Its pathway is protein modification; protein lipoylation via endogenous pathway; protein N(6)-(lipoyl)lysine from octanoyl-[acyl-carrier-protein]: step 1/2. Its function is as follows. Catalyzes the transfer of endogenously produced octanoic acid from octanoyl-acyl-carrier-protein onto the lipoyl domains of lipoate-dependent enzymes. Lipoyl-ACP can also act as a substrate although octanoyl-ACP is likely to be the physiological substrate. This Pseudomonas savastanoi pv. phaseolicola (strain 1448A / Race 6) (Pseudomonas syringae pv. phaseolicola (strain 1448A / Race 6)) protein is Octanoyltransferase.